Consider the following 312-residue polypeptide: MSSAPPAPRVIAVVGPTAAGKSDLGVFLAQRLGGEVVNADSMQLYRGMDIGTAKLTPEERGGVPHHLLDIWDVTVTASVAEYQRLARERIDALLAEGRWPILVGGSGLYVRGAVDNLEFPGTDPGIRARLEEELELRGPGALHARLAVADPEAARAILPSNGRRIVRALEVIEITGRPFTANLPGHDSVYDTVQIGVDVARPELHERIALRVDRMWEAGLVDEVRALEAQGLREGRTASRALGYQQVLAALAGECTLDEARAETVRATKRFARRQDSWFRRDPRVHWLSGGVADRTELPRLALSLVERPVTA.

15–22 (GPTAAGKS) is an ATP binding site. 17–22 (TAAGKS) is a binding site for substrate. The segment at 40-43 (DSMQ) is interaction with substrate tRNA.

It belongs to the IPP transferase family. Monomer. Requires Mg(2+) as cofactor.

The catalysed reaction is adenosine(37) in tRNA + dimethylallyl diphosphate = N(6)-dimethylallyladenosine(37) in tRNA + diphosphate. Functionally, catalyzes the transfer of a dimethylallyl group onto the adenine at position 37 in tRNAs that read codons beginning with uridine, leading to the formation of N6-(dimethylallyl)adenosine (i(6)A). The protein is tRNA dimethylallyltransferase of Streptomyces coelicolor (strain ATCC BAA-471 / A3(2) / M145).